The sequence spans 89 residues: Small ribosomal subunit protein uS19 (89 aa).

This sequence belongs to the universal ribosomal protein uS19 family.

Protein S19 forms a complex with S13 that binds strongly to the 16S ribosomal RNA. This is Small ribosomal subunit protein uS19 from Vesicomyosocius okutanii subsp. Calyptogena okutanii (strain HA).